The chain runs to 287 residues: tRNA pseudouridine synthase B (287 aa).

Aspartate 38 (nucleophile) is an active-site residue.

It belongs to the pseudouridine synthase TruB family. Type 1 subfamily.

The enzyme catalyses uridine(55) in tRNA = pseudouridine(55) in tRNA. Its function is as follows. Responsible for synthesis of pseudouridine from uracil-55 in the psi GC loop of transfer RNAs. The protein is tRNA pseudouridine synthase B of Mycoplasma mobile (strain ATCC 43663 / 163K / NCTC 11711) (Mesomycoplasma mobile).